The chain runs to 318 residues: Pheromone-regulated membrane protein 5 (318 aa).

A disordered region spans residues 15 to 56; the sequence is TTSTSSTTTASSSSTITSVXSSSSSLPLLSNSTSSSIIPSIT. Residues 78–98 traverse the membrane as a helical segment; that stretch reads FIVVGGIAGVIFLAILLWWVI. Phosphoserine is present on Ser129. Low complexity predominate over residues 238–247; the sequence is TISSSSASSL. Residues 238-318 form a disordered region; sequence TISSSSASSL…HMLEGKEQDE (81 aa). The segment covering 250–261 has biased composition (basic and acidic residues); that stretch reads GNEKEVGEDIRK. Residues 276 to 285 show a composition bias toward polar residues; it reads SPESDGSVNR. A phosphoserine mark is found at Ser279, Ser282, and Ser288. Residues 309–318 are compositionally biased toward basic and acidic residues; sequence HMLEGKEQDE. Lys314 participates in a covalent cross-link: Glycyl lysine isopeptide (Lys-Gly) (interchain with G-Cter in ubiquitin).

Belongs to the PRM5 family.

The protein resides in the membrane. This chain is Pheromone-regulated membrane protein 5 (PRM5), found in Saccharomyces cerevisiae (strain Lalvin QA23) (Baker's yeast).